We begin with the raw amino-acid sequence, 94 residues long: Co-chaperonin GroES (94 aa).

It belongs to the GroES chaperonin family. In terms of assembly, heptamer of 7 subunits arranged in a ring. Interacts with the chaperonin GroEL.

It localises to the cytoplasm. Functionally, together with the chaperonin GroEL, plays an essential role in assisting protein folding. The GroEL-GroES system forms a nano-cage that allows encapsulation of the non-native substrate proteins and provides a physical environment optimized to promote and accelerate protein folding. GroES binds to the apical surface of the GroEL ring, thereby capping the opening of the GroEL channel. This Halalkalibacterium halodurans (strain ATCC BAA-125 / DSM 18197 / FERM 7344 / JCM 9153 / C-125) (Bacillus halodurans) protein is Co-chaperonin GroES.